Reading from the N-terminus, the 218-residue chain is Ribose-5-phosphate isomerase A (218 aa).

Substrate is bound by residues 28 to 31 (TGST), 81 to 84 (DGAD), and 94 to 97 (KGGG). The Proton acceptor role is filled by glutamate 103. A substrate-binding site is contributed by lysine 121.

This sequence belongs to the ribose 5-phosphate isomerase family. As to quaternary structure, homodimer.

The enzyme catalyses aldehydo-D-ribose 5-phosphate = D-ribulose 5-phosphate. It functions in the pathway carbohydrate degradation; pentose phosphate pathway; D-ribose 5-phosphate from D-ribulose 5-phosphate (non-oxidative stage): step 1/1. Catalyzes the reversible conversion of ribose-5-phosphate to ribulose 5-phosphate. The sequence is that of Ribose-5-phosphate isomerase A from Aliivibrio fischeri (strain ATCC 700601 / ES114) (Vibrio fischeri).